The primary structure comprises 777 residues: Cyclin-F (777 aa).

Residues 20-28 (KRRIKRRPR) carry the Nuclear localization signal 1 motif. Residues 29–76 (NLTILSLPEDVLFHILKWLSVGDILAVRAVHSHLKYLVDNHASVWASA) enclose the F-box domain. Residues 288 to 405 (QASQAVNKQQ…EIISALEGKI (118 aa)) form the Cyclin N-terminal domain. Short sequence motifs (d box) lie at residues 310–313 (RYIL), 343–346 (RRRL), and 349–352 (RYKL). Disordered regions lie at residues 544-591 (QESP…TPTA) and 651-777 (QESS…HLAS). Positions 568 to 574 (RRSKRKR) match the Nuclear localization signal 2 motif. The PEST stretch occupies residues 582 to 761 (RGSFVTTPTA…ESGVHQQPVK (180 aa)). 2 stretches are compositionally biased toward low complexity: residues 695-708 (SGYS…PISS) and 719-731 (STSV…HSST). Residues 751–767 (PESGVHQQPVKRQNLSV) show a composition bias toward polar residues. Residues 762-765 (RQNL) carry the D box 4 motif. The segment covering 768 to 777 (HSDKDMHLAS) has biased composition (basic and acidic residues).

The protein belongs to the cyclin family. Cyclin AB subfamily. As to quaternary structure, component of the SCF(CCNF) complex consisting of CUL1, RBX1, SKP1 and CCNF. Interacts with SKP1. Interacts with CUL1. Interacts with CCNB1; interaction is required for nuclear localization of CCNB1. Interacts with CCP110; this interaction leads to CCP110 ubiquitination and degradation via the proteasome pathway. Interacts (via the Cyclin N-terminal domain) with MYBL2/BMYB. Interacts with FZR1/CDH1 (via N-terminus). Interacts with RRM2 (via Cy motif and when phosphorylated at 'Thr-33'); the interaction occurs exclusively in G2 and early M. Interacts with CDC6 (via Cy motif); the interaction takes place during G2 and M phase. In terms of processing, degraded when the spindle assembly checkpoint is activated during the G2-M transition. Degradation is not dependent on the proteasome or ubiquitin and depends on the C-terminal PEST sequence. Post-translationally, phosphorylated just before cells enter into mitosis. Ubiquitinated by the anaphase-promoting complex (APC/C); leading to its degradation by the proteasome.

The protein localises to the nucleus. It localises to the cytoplasm. The protein resides in the perinuclear region. Its subcellular location is the cytoskeleton. It is found in the microtubule organizing center. The protein localises to the centrosome. It localises to the centriole. Functionally, substrate recognition component of a SCF (SKP1-CUL1-F-box protein) E3 ubiquitin-protein ligase complex which mediates the ubiquitination and subsequent proteasomal degradation of target proteins. The SCF(CCNF) E3 ubiquitin-protein ligase complex is an integral component of the ubiquitin proteasome system (UPS) and links proteasome degradation to the cell cycle. Mediates the substrate recognition and the proteasomal degradation of various target proteins involved in the regulation of cell cycle progression and in the maintenance of genome stability. Mediates the ubiquitination and subsequent proteasomal degradation of CP110 during G2 phase, thereby acting as an inhibitor of centrosome reduplication. In G2, mediates the ubiquitination and proteasomal degradation of CDC6, thereby suppressing DNA re-replication and preventing genome instability. Involved in the ubiquitination and degradation of the substrate adapter CDH1 of the anaphase-promoting complex (APC/C), thereby acting as an antagonist of APC/C in regulating G1 progression and S phase entry. May play a role in the G2 cell cycle checkpoint control after DNA damage, possibly by promoting the ubiquitination of MYBL2/BMYB. The protein is Cyclin-F (Ccnf) of Mus musculus (Mouse).